Reading from the N-terminus, the 484-residue chain is tRNA-2-methylthio-N(6)-dimethylallyladenosine synthase (484 aa).

An MTTase N-terminal domain is found at 29 to 149 (GVFHIHTLGC…LPKLLDQNRA (121 aa)). 6 residues coordinate [4Fe-4S] cluster: Cys38, Cys78, Cys112, Cys186, Cys190, and Cys193. Positions 172 to 401 (RASRISSWVA…VALQEQITEE (230 aa)) constitute a Radical SAM core domain. The 71-residue stretch at 404 to 474 (ATFEGRDVEV…RHNLLADPDV (71 aa)) folds into the TRAM domain.

It belongs to the methylthiotransferase family. MiaB subfamily. In terms of assembly, monomer. [4Fe-4S] cluster serves as cofactor.

The protein localises to the cytoplasm. The enzyme catalyses N(6)-dimethylallyladenosine(37) in tRNA + (sulfur carrier)-SH + AH2 + 2 S-adenosyl-L-methionine = 2-methylsulfanyl-N(6)-dimethylallyladenosine(37) in tRNA + (sulfur carrier)-H + 5'-deoxyadenosine + L-methionine + A + S-adenosyl-L-homocysteine + 2 H(+). In terms of biological role, catalyzes the methylthiolation of N6-(dimethylallyl)adenosine (i(6)A), leading to the formation of 2-methylthio-N6-(dimethylallyl)adenosine (ms(2)i(6)A) at position 37 in tRNAs that read codons beginning with uridine. This Bifidobacterium longum (strain DJO10A) protein is tRNA-2-methylthio-N(6)-dimethylallyladenosine synthase.